Here is a 157-residue protein sequence, read N- to C-terminus: Arginine repressor (157 aa).

It belongs to the ArgR family.

It localises to the cytoplasm. It participates in amino-acid biosynthesis; L-arginine biosynthesis [regulation]. In terms of biological role, regulates arginine biosynthesis genes. In Deinococcus radiodurans (strain ATCC 13939 / DSM 20539 / JCM 16871 / CCUG 27074 / LMG 4051 / NBRC 15346 / NCIMB 9279 / VKM B-1422 / R1), this protein is Arginine repressor.